A 1138-amino-acid polypeptide reads, in one-letter code: Nuclear pore complex-interacting protein family member B4 (1138 aa).

Residues 63–87 (VIIAFPTSYKVVITLWIVYLWVSLL) form a helical membrane-spanning segment. 3 disordered regions span residues 241–263 (NRMGHQPPPPTQQHSITDNSLSL), 291–620 (TPLP…NIKT), and 873–1138 (ERLR…RRLS). Residues 252 to 262 (QQHSITDNSLS) are compositionally biased toward polar residues. The span at 349–359 (PLPPSALPSAP) shows a compositional bias: pro residues. Composition is skewed to basic and acidic residues over residues 406 to 416 (DNIKTPAERLR), 448 to 458 (DNIKTPAERLR), 490 to 500 (DNIKTPAERLR), 532 to 542 (DNIKTPAERLR), 574 to 584 (DNIKTPAERLR), 908 to 918 (DNIKTPAERLR), 950 to 960 (DNIKTPAERLR), and 992 to 1002 (DNIKTPAERLR).

Belongs to the NPIP family.

It is found in the membrane. The chain is Nuclear pore complex-interacting protein family member B4 (NPIPB4) from Homo sapiens (Human).